A 264-amino-acid chain; its full sequence is Undecaprenyl-diphosphatase (264 aa).

A run of 8 helical transmembrane segments spans residues 1-21 (MDIV…FLPI), 39-59 (QGLA…VFYF), 83-103 (STLV…GLAF), 113-133 (SGIV…LADK), 143-163 (VTIK…IPGV), 181-201 (VGSA…AGGL), 220-240 (LAAL…MSII), and 244-264 (SMTP…FIFV).

This sequence belongs to the UppP family.

Its subcellular location is the cell inner membrane. The enzyme catalyses di-trans,octa-cis-undecaprenyl diphosphate + H2O = di-trans,octa-cis-undecaprenyl phosphate + phosphate + H(+). Functionally, catalyzes the dephosphorylation of undecaprenyl diphosphate (UPP). Confers resistance to bacitracin. The sequence is that of Undecaprenyl-diphosphatase from Campylobacter curvus (strain 525.92).